Consider the following 460-residue polypeptide: Argininosuccinate lyase (460 aa).

The protein belongs to the lyase 1 family. Argininosuccinate lyase subfamily.

Its subcellular location is the cytoplasm. It carries out the reaction 2-(N(omega)-L-arginino)succinate = fumarate + L-arginine. Its pathway is amino-acid biosynthesis; L-arginine biosynthesis; L-arginine from L-ornithine and carbamoyl phosphate: step 3/3. The protein is Argininosuccinate lyase of Maridesulfovibrio salexigens (strain ATCC 14822 / DSM 2638 / NCIMB 8403 / VKM B-1763) (Desulfovibrio salexigens).